Here is a 64-residue protein sequence, read N- to C-terminus: MGGGRVAHPVLKGPSVVKELVIGTVLGLAAGGLWKMHHWNEQRKTRAFYDLLEKGEISVVVDEE.

Residues 15-34 (SVVKELVIGTVLGLAAGGLW) traverse the membrane as a helical segment.

This sequence belongs to the cytochrome c oxidase subunit 5C family.

The protein resides in the mitochondrion inner membrane. This protein is one of the nuclear-coded polypeptide chains of cytochrome c oxidase, the terminal oxidase in mitochondrial electron transport. The protein is Cytochrome c oxidase subunit 5C-2 (COX5C2) of Helianthus annuus (Common sunflower).